The following is a 321-amino-acid chain: Serine/threonine-protein phosphatase 4 catalytic subunit 2 (321 aa).

Residues Asp64, His66, Asp92, and Asn124 each contribute to the Mn(2+) site. The active-site Proton donor is the His125. Mn(2+)-binding residues include His174 and His249.

The protein belongs to the PPP phosphatase family. PP-4 (PP-X) subfamily. As to quaternary structure, serine/threonine-protein phosphatase 4 (PP4) occurs in different assemblies of the catalytic and one or more regulatory subunits. It depends on Mn(2+) as a cofactor.

It carries out the reaction O-phospho-L-seryl-[protein] + H2O = L-seryl-[protein] + phosphate. The catalysed reaction is O-phospho-L-threonyl-[protein] + H2O = L-threonyl-[protein] + phosphate. Its function is as follows. Protein phosphatase which seems to be involved in larval development but not essential for embryogenesis. The polypeptide is Serine/threonine-protein phosphatase 4 catalytic subunit 2 (Caenorhabditis elegans).